The primary structure comprises 561 residues: MKKVWLNRYPADVPAEINPDRYQSLVELFEHAATRYADQPAFVNMGEVMTFRKLEERSRAFAAYLQQGLGLKKGDRVALMMPNLLQYPVALFGILRAGMIVVNVNPLYTPRELEHQLNDSGAAAIIIVSNFAHTLEKVVEKTSVQHVILTRMGDQLSTAKGTVVNFVVKYIKRLVPKYHLPDAISFRSALQHGYRMQYVKPEVVAEDLAFLQYTGGTTGVAKGAMLTHRNMLANLEQVKATYGPLLHPGKELVVTALPLYHIFALTMNCLLFIELGGQNLLITNPRDIPGLVKELAKYPFTAMTGVNTLFNALLNNKEFQQLDFSSLHLSAGGGMPVQNVVAERWVKLTGQYLLEGYGLTECAPLVSVNPHDIDYHSGSIGLPVPSTEAKLVDDDDNEVAPGEAGELCVKGPQVMLGYWQRPDATDEIIKDGWLHTGDIAVMDEDGFLRIVDRKKDMILVSGFNVYPNEIEDVVMQHSGVQEVAAVGVPSGSSGEAVKLFVVKKDPALTDDALITFCRRHLTGYKVPKQVEFREELPKSNVGKILRRELRDEARGKVDNKA.

Residue 213 to 224 (YTGGTTGVAKGA) participates in ATP binding.

This sequence belongs to the ATP-dependent AMP-binding enzyme family. Requires Mg(2+) as cofactor.

The protein resides in the membrane. The enzyme catalyses a long-chain fatty acid + ATP + CoA = a long-chain fatty acyl-CoA + AMP + diphosphate. It participates in lipid metabolism; fatty acid beta-oxidation. Its function is as follows. Catalyzes the esterification, concomitant with transport, of exogenous long-chain fatty acids into metabolically active CoA thioesters for subsequent degradation or incorporation into phospholipids. The protein is Long-chain-fatty-acid--CoA ligase (fadD) of Salmonella typhi.